The chain runs to 426 residues: MRGLKTLSKRYLFTSESVTEGHPDKVCDQISDTILDALLTLDPNSRVAAETVVNTGLTLVTGEITSQAHINFVELIRQKIAEIGYTNADNGYSANSCAVMLAIDEQSPDISQGVTAAQEQRHALSDDELDKIGAGDQGLMFGYACNETPELMPLPISLAHRIALRLSEVRKSGQLAYLRPDGKTQVSILYEDGSPVAIDTILISTQHDEHIGDITDNDAVQAKIKADLWDVVVGHCFSDIALKPTDKTRFIVNPTGKFVVGGPQGDAGLTGRKIIVDTYGGYSRHGGGAFSGKDPTKVDRSAAYAARYVAKNIVAAGLADKCEVQVSYAIGVARPVSVLIDTFGTGKVDEEKLLEVVLANFELRPAGIIQSLNLRNLPAERGGRFYQDVAAYGHFGRNDLDLPWEYTDKVDVLKAAFASSPQAVAV.

H22 contacts ATP. D24 serves as a coordination point for Mg(2+). Residue E50 coordinates K(+). Positions 63 and 106 each coordinate L-methionine. Positions 106 to 116 (QSPDISQGVTA) are flexible loop. Residues 181–183 (DGK), 257–258 (KF), D266, 272–273 (RK), A289, and K293 contribute to the ATP site. An L-methionine-binding site is contributed by D266. An L-methionine-binding site is contributed by K297.

Belongs to the AdoMet synthase family. In terms of assembly, homotetramer; dimer of dimers. The cofactor is Mg(2+). K(+) serves as cofactor.

It localises to the cytoplasm. The enzyme catalyses L-methionine + ATP + H2O = S-adenosyl-L-methionine + phosphate + diphosphate. It functions in the pathway amino-acid biosynthesis; S-adenosyl-L-methionine biosynthesis; S-adenosyl-L-methionine from L-methionine: step 1/1. Functionally, catalyzes the formation of S-adenosylmethionine (AdoMet) from methionine and ATP. The overall synthetic reaction is composed of two sequential steps, AdoMet formation and the subsequent tripolyphosphate hydrolysis which occurs prior to release of AdoMet from the enzyme. The sequence is that of S-adenosylmethionine synthase from Synechocystis sp. (strain ATCC 27184 / PCC 6803 / Kazusa).